A 248-amino-acid chain; its full sequence is Biosynthetic peptidoglycan transglycosylase (248 aa).

Residues 20–42 form a helical membrane-spanning segment; that stretch reads WLRWLMAAPLLFAAASVLQVLIL.

The protein belongs to the glycosyltransferase 51 family.

The protein localises to the cell inner membrane. It carries out the reaction [GlcNAc-(1-&gt;4)-Mur2Ac(oyl-L-Ala-gamma-D-Glu-L-Lys-D-Ala-D-Ala)](n)-di-trans,octa-cis-undecaprenyl diphosphate + beta-D-GlcNAc-(1-&gt;4)-Mur2Ac(oyl-L-Ala-gamma-D-Glu-L-Lys-D-Ala-D-Ala)-di-trans,octa-cis-undecaprenyl diphosphate = [GlcNAc-(1-&gt;4)-Mur2Ac(oyl-L-Ala-gamma-D-Glu-L-Lys-D-Ala-D-Ala)](n+1)-di-trans,octa-cis-undecaprenyl diphosphate + di-trans,octa-cis-undecaprenyl diphosphate + H(+). It functions in the pathway cell wall biogenesis; peptidoglycan biosynthesis. Peptidoglycan polymerase that catalyzes glycan chain elongation from lipid-linked precursors. In Xanthomonas euvesicatoria pv. vesicatoria (strain 85-10) (Xanthomonas campestris pv. vesicatoria), this protein is Biosynthetic peptidoglycan transglycosylase.